The following is a 715-amino-acid chain: Discoidin, CUB and LCCL domain-containing protein 1 (715 aa).

Residues 1–34 (MVPGARGGGALARAAGRGLLALLLAVSAPLRLQA) form the signal peptide. Topologically, residues 35–459 (EELGDGCGHL…TSTGINITTV (425 aa)) are extracellular. Disulfide bonds link C41–C68 and C94–C112. The 110-residue stretch at 41–150 (CGHLVTYQDS…RGFLLTYASS (110 aa)) folds into the CUB domain. N64 carries N-linked (GlcNAc...) asparagine glycosylation. N-linked (GlcNAc...) asparagine glycosylation occurs at N124. The 97-residue stretch at 152-248 (HPDLITCLER…RDGSLSDKRF (97 aa)) folds into the LCCL domain. 2 disulfides stabilise this stretch: C158–C174 and C178–C200. Residues 248 to 412 (FLFTSNGCSR…IALKVELIGC (165 aa)) enclose the F5/8 type C domain. Residue N277 is glycosylated (N-linked (GlcNAc...) asparagine). A disordered region spans residues 278–312 (ESGDQVHWSPGQARLQDQGPSWASGDSSNNHKPRE). The span at 295–307 (QGPSWASGDSSNN) shows a compositional bias: polar residues. N351, N418, and N455 each carry an N-linked (GlcNAc...) asparagine glycan. The chain crosses the membrane as a helical span at residues 460–480 (AIPLVLLVVLVFAGMGIFAAF). Residues 481–715 (RKKKKKGSPY…LNQTAMTALL (235 aa)) lie on the Cytoplasmic side of the membrane. A Phosphoserine modification is found at S513. T614 carries the post-translational modification Phosphothreonine. Residues 619–702 (SGYRVPGPQP…SDSYSAPRDC (84 aa)) form a disordered region.

It localises to the membrane. The protein is Discoidin, CUB and LCCL domain-containing protein 1 (DCBLD1) of Homo sapiens (Human).